The following is an 860-amino-acid chain: Valine--tRNA ligase (860 aa).

The 'HIGH' region motif lies at proline 53–histidine 63. A 'KMSKS' region motif is present at residues lysine 527 to serine 531. Residue lysine 530 participates in ATP binding. Residues glutamine 794 to lysine 860 are a coiled coil.

Belongs to the class-I aminoacyl-tRNA synthetase family. ValS type 1 subfamily. As to quaternary structure, monomer.

The protein resides in the cytoplasm. It catalyses the reaction tRNA(Val) + L-valine + ATP = L-valyl-tRNA(Val) + AMP + diphosphate. Functionally, catalyzes the attachment of valine to tRNA(Val). As ValRS can inadvertently accommodate and process structurally similar amino acids such as threonine, to avoid such errors, it has a 'posttransfer' editing activity that hydrolyzes mischarged Thr-tRNA(Val) in a tRNA-dependent manner. The sequence is that of Valine--tRNA ligase from Mycoplasmoides gallisepticum (strain R(low / passage 15 / clone 2)) (Mycoplasma gallisepticum).